The chain runs to 275 residues: Adaptin ear-binding coat-associated protein 1 (275 aa).

A disordered region spans residues 166-190; the sequence is ITTKKGGTSKPKTAGTGGLSLLPPP. Low complexity predominate over residues 167–179; that stretch reads TTKKGGTSKPKTA. At threonine 211 the chain carries Phosphothreonine. The disordered stretch occupies residues 215–275; sequence IPKSNHGGSD…APQPSNWVQF (61 aa). Short sequence motifs (WXXF motif) lie at residues 252-255 and 272-275; these read WGDF and WVQF. The span at 256-275 shows a compositional bias: polar residues; that stretch reads STASSSVPNQAPQPSNWVQF.

This sequence belongs to the NECAP family. As to quaternary structure, interacts with AP1G1 and AP2A1 components of the adapter protein complexes AP-1 and AP-2. Interacts with the GAE domain proteins GGA1, GGA2 and GGA3.

It is found in the cytoplasmic vesicle. It localises to the clathrin-coated vesicle membrane. The protein resides in the cell membrane. Involved in endocytosis. This is Adaptin ear-binding coat-associated protein 1 (NECAP1) from Bos taurus (Bovine).